The following is a 144-amino-acid chain: 3-dehydroquinate dehydratase (144 aa).

Tyrosine 22 functions as the Proton acceptor in the catalytic mechanism. Positions 73, 79, and 86 each coordinate substrate. Histidine 99 functions as the Proton donor in the catalytic mechanism. Substrate contacts are provided by residues 100–101 (LS) and arginine 110.

It belongs to the type-II 3-dehydroquinase family. In terms of assembly, homododecamer.

The enzyme catalyses 3-dehydroquinate = 3-dehydroshikimate + H2O. It participates in metabolic intermediate biosynthesis; chorismate biosynthesis; chorismate from D-erythrose 4-phosphate and phosphoenolpyruvate: step 3/7. In terms of biological role, catalyzes a trans-dehydration via an enolate intermediate. This chain is 3-dehydroquinate dehydratase, found in Trichlorobacter lovleyi (strain ATCC BAA-1151 / DSM 17278 / SZ) (Geobacter lovleyi).